The following is a 109-amino-acid chain: Iron-sulfur cluster assembly protein CyaY (109 aa).

Belongs to the frataxin family.

Functionally, involved in iron-sulfur (Fe-S) cluster assembly. May act as a regulator of Fe-S biogenesis. The protein is Iron-sulfur cluster assembly protein CyaY of Albidiferax ferrireducens (strain ATCC BAA-621 / DSM 15236 / T118) (Rhodoferax ferrireducens).